The primary structure comprises 606 residues: Gamma-aminobutyric acid receptor subunit beta (606 aa).

An N-terminal signal peptide occupies residues 1–44 (MSDSKMDKLARMAPLPRTPLLTIWLAINMALIAQETGHKRIHTV). Topologically, residues 45-268 (QAATGGGSML…CEIQFVRSMG (224 aa)) are extracellular. An N-linked (GlcNAc...) asparagine glycan is attached at N58. An intrachain disulfide couples C185 to C199. N253 carries N-linked (GlcNAc...) asparagine glycosylation. The next 3 helical transmembrane spans lie at 269–291 (YYLIQIYIPSGLIVIISWVSFWL), 297–316 (PARVALGVTTVLTMTTLMSS), and 333–356 (YLGTCFVMVFASLLEYATVGYMAK). At 357–568 (RIQMRKQRFM…LGITPSDIDK (212 aa)) the chain is on the cytoplasmic side. 2 disordered regions span residues 376–451 (KQQL…VSNR) and 482–542 (HDPK…AAVP). Over residues 381–395 (GANQQQANPNPNANV) the composition is skewed to low complexity. Residues 396–425 (GGPGGVGVGPGGPGGPGGGVNVGVGMGMGP) show a composition bias toward gly residues. The segment covering 430 to 443 (GHGHHAHSHGHPHA) has biased composition (basic residues). A compositionally biased stretch (gly residues) spans 499–536 (GGRGGPQSHGPGPGQGGGPPGGGGGGGGGGGPPEGGGD). A helical membrane pass occupies residues 569–590 (YSRIVFPVCFVCFNLMYWIIYL).

This sequence belongs to the ligand-gated ion channel (TC 1.A.9) family. Gamma-aminobutyric acid receptor (TC 1.A.9.5) subfamily. In terms of assembly, forms oligomers. Interacts with Nlg4; the interaction mediates Rdl clustering. Interacts with Fbxl4; the interaction mediates Rdl degradation. In terms of tissue distribution, expressed in different parts of the brain: the mushroom bodies (alpha, alpha', beta, beta', gamma lobes and peduncles), the neurons projecting to the columnar-type neuron LC9 optic glomerulus, in interneurons connecting the paired olfactory lobes, antennal lobes, PDF-expressing small and large ventral lateral neurons (LNvs) of the circadian clock and lobula columnar neuron 11 (LC11) (at protein level). Expressed in all major ON pathway medulla neurons (Mi1, Tm3, Mi4, and Mi9) and in OFF pathway neurons (Tm1, Tm2, Tm4, and Tm9).

The protein resides in the cell membrane. The protein localises to the postsynaptic cell membrane. Its subcellular location is the cell projection. It is found in the dendrite. It localises to the axon. Activated by agonist muscimol. Insensitive to zinc, glycine, glutamate, and baclofen, loreclezole, to antagonist bicuculline, glycine-receptor antagonist strychnine, and nonselective GABA and glycine antagonist RU 5135. Insensitive to flunitrazepam, pentobarbitone or pregnane steroids such as 5alpha-pregnan-3alpha-ol-20-one. Inhibited by insecticides picrotoxin (PTX), cyclodiene dieldrin, TBPS and lindane. Inhibited by ivermectin, fipronil and pyrafluprole. Its activity is regulated as follows. Inhibited by insecticides picrotoxin (PTX). Gamma-aminobutyric acid (GABA) receptor voltage channel subunit. GABA, an inhibitory neurotransmitter, mediates neuronal inhibition by binding to the GABA receptor and opening an integral chloride channel. Together with glutamate receptor GluClalpha, plays an important role in the visual response by regulating the activity of ON/OFF-selective neurons. Plays a role in promoting sleep and sleep latency by regulating the activity of peptidergic PDF neurons. In large ventral lateral clock neurons, clustering is mediated by Nlg4 and protein levels undergo daily degradation in response to the circadian clock. In neurons in the mushroom bodies, has a role in odor memory acquisition where it inhibits appetitive and aversive olfactory learning, probably upstream of Adcy1/adenylate cyclase 1 and GTPase activating protein Nf1. In male-specific GABAergic neurons, plays a role in inhibiting male aggressive behavior during courtship. Functionally, gamma-aminobutyric acid (GABA) receptor voltage channel subunit. This Drosophila melanogaster (Fruit fly) protein is Gamma-aminobutyric acid receptor subunit beta (Rdl).